We begin with the raw amino-acid sequence, 408 residues long: MAFLARKTSSLLPATTSSTVKHMIYDEPHFAMQNSLAKLIKEKINPNVAQWEKSGRYPAHFVFKMLGQLGVFAVNKPVDYGGTGRDFAMSIAIAEQIGAVDCGSIPMSVMVQSDMSTPALAQFGSDSLRNRFLRPSINGDLVSSIAVSEPHAGSDVSAIRTHARRYGSDLIINGSKMWITNGDQADWACVLVNTSNAKNLHKNKSLVCIPLDSIGVHRSTPLDKLGMRSSDTVQLFFEDVRVPSSYIIGEEGRGFAYQMNQFNDERLVTVAVGLLPLQKCINETIEYARERLIFGKTLLDQQYVQFRLAELEAELEATRSLLYRTVLARCQGEDVSMLTAMAKLKIGRLARKVTDQCLQIWGGAGYLNDNGISRAFRDFRIFSIGAGCDEVMMQIIHKTQSKRQQKRI.

The active-site Proton acceptor is the glutamate 265.

It belongs to the acyl-CoA dehydrogenase family. Homotetramer. Requires FAD as cofactor.

The catalysed reaction is 3-methylbutanoyl-CoA + oxidized [electron-transfer flavoprotein] + H(+) = 3-methylbut-2-enoyl-CoA + reduced [electron-transfer flavoprotein]. It functions in the pathway amino-acid degradation; L-leucine degradation; (S)-3-hydroxy-3-methylglutaryl-CoA from 3-isovaleryl-CoA: step 1/3. The polypeptide is Probable acyl-CoA dehydrogenase 6 (acdh-6) (Caenorhabditis elegans).